The chain runs to 125 residues: Evasin P672 (125 aa).

Residues 1–21 (MAHKIAIGLVCVLYALHIMSA) form the signal peptide. 8 N-linked (GlcNAc...) asparagine glycosylation sites follow: Asn35, Asn55, Asn65, Asn72, Asn78, Asn104, Asn112, and Asn118. 3 disulfide bridges follow: Cys70-Cys110, Cys87-Cys115, and Cys105-Cys124.

The protein resides in the secreted. Salivary chemokine-binding protein which has chemokine-neutralizing activity and binds to host chemokines CCL1, CCL2, CCL3, CCL3L1, CCL7, CCL8, CCL11, CCL12, CCL13, CCL14, CCL15, CCL16, CCL18 and CCL23. Binds to CCL8 with 1:1 stoichiometry and disrupts CCL8 homodimer formation. This chain is Evasin P672, found in Rhipicephalus pulchellus (Yellow backed tick).